We begin with the raw amino-acid sequence, 394 residues long: Argininosuccinate synthase (394 aa).

ATP is bound at residue Ala-8–Ser-16. 2 residues coordinate L-citrulline: Tyr-86 and Ser-91. Gly-116 provides a ligand contact to ATP. The L-aspartate site is built by Thr-118, Asn-122, and Asp-123. Residue Asn-122 coordinates L-citrulline. Positions 126, 172, 181, 256, and 268 each coordinate L-citrulline.

Belongs to the argininosuccinate synthase family. Type 1 subfamily. In terms of assembly, homotetramer.

It is found in the cytoplasm. It catalyses the reaction L-citrulline + L-aspartate + ATP = 2-(N(omega)-L-arginino)succinate + AMP + diphosphate + H(+). It participates in amino-acid biosynthesis; L-arginine biosynthesis; L-arginine from L-ornithine and carbamoyl phosphate: step 2/3. The sequence is that of Argininosuccinate synthase from Methanococcoides burtonii (strain DSM 6242 / NBRC 107633 / OCM 468 / ACE-M).